We begin with the raw amino-acid sequence, 347 residues long: P2Y purinoceptor 12 (347 aa).

Residues 1–33 are Extracellular-facing; the sequence is MDVPGVNTTSANTTFSPGTSTLCVRDYKITQVL. N-linked (GlcNAc...) asparagine glycosylation is found at asparagine 7 and asparagine 12. 2 disulfide bridges follow: cysteine 23-cysteine 276 and cysteine 103-cysteine 181. The helical transmembrane segment at 34-56 threads the bilayer; that stretch reads FPLLYTVLFFAGLITNSLAMRIF. The Cytoplasmic segment spans residues 57 to 67; that stretch reads FQIRSKSNFII. A phosphoserine mark is found at serine 61 and serine 63. Residues 68-88 form a helical membrane-spanning segment; that stretch reads FLKNTVISDLLMILTFPFKIL. The Extracellular portion of the chain corresponds to 89–103; that stretch reads SDAKLGAGPLRTLVC. Positions 99, 103, and 111 each coordinate ADP. The chain crosses the membrane as a helical span at residues 104 to 124; it reads QVTSVTFYFTMYISISFLGLI. At 125–148 the chain is on the cytoplasmic side; it reads TIDRYLKTTRPFKTSSPSNLLGAK. A helical membrane pass occupies residues 149–168; it reads ILSVVIWAFMFLISLPNMIL. ADP contacts are provided by residues 162–165, 181–185, histidine 193, and asparagine 197; these read SLPN and CSFLK. Residues 169 to 191 lie on the Extracellular side of the membrane; that stretch reads TNRRPKDKDVTKCSFLKSEFGLV. A helical transmembrane segment spans residues 192 to 213; that stretch reads WHEIVNYICQVIFWINFLIVIV. The Cytoplasmic segment spans residues 214–239; sequence CYSLITKELYRSYVRTRGSAKVPKKK. A helical membrane pass occupies residues 240–265; sequence VNVKVFIIIAVFFICFVPFHFARIPY. Residues 262–265, glutamine 269, and lysine 286 contribute to the ADP site; that span reads RIPY. Residues 266–284 lie on the Extracellular side of the membrane; it reads TLSQTRAVFDCSAENTLFY. The chain crosses the membrane as a helical span at residues 285 to 304; the sequence is VKESTLWLTSLNACLDPFIY. The Cytoplasmic portion of the chain corresponds to 305 to 347; it reads FFLCKSFRNSLTSMLRCSNSTSTSGTNKKKGQEGGEPSEETPM. The segment at 321–347 is disordered; the sequence is CSNSTSTSGTNKKKGQEGGEPSEETPM.

Belongs to the G-protein coupled receptor 1 family.

The protein localises to the cell membrane. Receptor for ADP and ATP coupled to G-proteins that inhibit the adenylyl cyclase second messenger system. Required for normal platelet aggregation and blood coagulation. This chain is P2Y purinoceptor 12 (P2ry12), found in Mus musculus (Mouse).